We begin with the raw amino-acid sequence, 1777 residues long: Fatty acid synthase subunit alpha (1777 aa).

The segment at 101–124 (APVESADNEPAQPAASSTPAAPAP) is disordered. A compositionally biased stretch (low complexity) spans 110 to 120 (PAQPAASSTPA). Positions 151–237 (LSAIDVVISI…KVMGGHIDRL (87 aa)) constitute a Carrier domain. At Ser-186 the chain carries O-(pantetheine 4'-phosphoryl)serine. The ketoreductase (KR) domain stretch occupies residues 563–803 (FTGRRVLVTG…ILSLLSGDIL (241 aa)). The region spanning 1007–1539 (KEIMHEVVID…QKGGLVVGIA (533 aa)) is the Ketosynthase family 3 (KS3) domain. Catalysis depends on for beta-ketoacyl synthase activity residues Cys-1193, His-1424, and His-1465. Residue Asp-1661 participates in Mg(2+) binding. Acetyl-CoA is bound by residues 1661-1663 (DIE), 1706-1716 (EAIFKSLQIPS), 1730-1734 (SNGAQ), and 1760-1762 (ITH).

It belongs to the thiolase-like superfamily. Fungal fatty acid synthetase subunit alpha family. Fatty acid synthase is composed of alpha and beta subunits.

The enzyme catalyses acetyl-CoA + n malonyl-CoA + 2n NADPH + 4n H(+) = a long-chain-acyl-CoA + n CoA + n CO2 + 2n NADP(+).. It catalyses the reaction a fatty acyl-[ACP] + malonyl-[ACP] + H(+) = a 3-oxoacyl-[ACP] + holo-[ACP] + CO2. It carries out the reaction a (3R)-hydroxyacyl-[ACP] + NADP(+) = a 3-oxoacyl-[ACP] + NADPH + H(+). It participates in secondary metabolite biosynthesis. Its function is as follows. Fatty acid synthase alpha subunit; part of the gene cluster that mediates the biosynthesis of oryzines, natural products with an unusual maleidride backbone. The two subunits of the fungal fatty acid synthase oryfasA and oryfasB probably form octenoic acid. This fatty acid is most likely activated by the acyl-CoA ligase oryP to give octenyl-CoA before the citrate synthase-like protein oryE catalyzes condensation with oxaloacetate to form tricarboxylic acid. The next steps of the pathways are conjectural, but a favorite possible route has been proposed, beginning with decarboxylation and concomitant dehydration by the decarboxylase oryM, followed by tautomerization, which may lead to the production of a diene intermediate. Reduction of this diene intermediate could give the known metabolite piliformic acid. On the pathway to oryzine B and oryzine A, however, hydroxylation of the diene by the alpha-ketoglutarate-dependent dioxygenase oryG and lactonisation by the lactonohydrolases oryH or oryL could give oryzine B directly. Finally, enoyl reduction by the dehydrogenase oryD would then convert oryzine B into oryzine A. The polypeptide is Fatty acid synthase subunit alpha (Aspergillus oryzae (strain ATCC 42149 / RIB 40) (Yellow koji mold)).